We begin with the raw amino-acid sequence, 501 residues long: Aspartyl/glutamyl-tRNA(Asn/Gln) amidotransferase subunit B (501 aa).

The segment at 276–299 is disordered; it reads HYQEADGSTSKGRPKETAEDYRYF. Residues 288 to 299 are compositionally biased toward basic and acidic residues; sequence RPKETAEDYRYF.

The protein belongs to the GatB/GatE family. GatB subfamily. In terms of assembly, heterotrimer of A, B and C subunits.

The enzyme catalyses L-glutamyl-tRNA(Gln) + L-glutamine + ATP + H2O = L-glutaminyl-tRNA(Gln) + L-glutamate + ADP + phosphate + H(+). It carries out the reaction L-aspartyl-tRNA(Asn) + L-glutamine + ATP + H2O = L-asparaginyl-tRNA(Asn) + L-glutamate + ADP + phosphate + 2 H(+). Its function is as follows. Allows the formation of correctly charged Asn-tRNA(Asn) or Gln-tRNA(Gln) through the transamidation of misacylated Asp-tRNA(Asn) or Glu-tRNA(Gln) in organisms which lack either or both of asparaginyl-tRNA or glutaminyl-tRNA synthetases. The reaction takes place in the presence of glutamine and ATP through an activated phospho-Asp-tRNA(Asn) or phospho-Glu-tRNA(Gln). This is Aspartyl/glutamyl-tRNA(Asn/Gln) amidotransferase subunit B from Corynebacterium glutamicum (strain R).